The following is a 250-amino-acid chain: Phosphonates import ATP-binding protein PhnC (250 aa).

An ABC transporter domain is found at 2-247; sequence ILFNNVNKVW…KLDAQAMKKI (246 aa). 35 to 42 lines the ATP pocket; it reads GLSGAGKT.

This sequence belongs to the ABC transporter superfamily. Phosphonates importer (TC 3.A.1.9.1) family. As to quaternary structure, the complex is composed of two ATP-binding proteins (PhnC), two transmembrane proteins (PhnE) and a solute-binding protein (PhnD).

Its subcellular location is the cell membrane. The enzyme catalyses phosphonate(out) + ATP + H2O = phosphonate(in) + ADP + phosphate + H(+). In terms of biological role, part of the ABC transporter complex PhnCDE involved in phosphonates import. Responsible for energy coupling to the transport system. The protein is Phosphonates import ATP-binding protein PhnC of Mycoplasma capricolum subsp. capricolum (strain California kid / ATCC 27343 / NCTC 10154).